We begin with the raw amino-acid sequence, 64 residues long: DNA-binding protein 7a (64 aa).

It belongs to the 7 kDa DNA-binding/endoribonuclease P2 family. In terms of assembly, monomer.

The protein localises to the cytoplasm. Functionally, can constrain negative DNA supercoils. May be involved in maintaining the integrity of the genome at high temperature. This chain is DNA-binding protein 7a, found in Saccharolobus islandicus (strain L.D.8.5 / Lassen #2) (Sulfolobus islandicus).